Here is a 388-residue protein sequence, read N- to C-terminus: MKFEVLKTDGNARAGVLTTAHSVIQTPIFMPVGTVGAVKSLDATDMREILDAKIILANTYHMYLRPGSRVVAEFGGLHGFCKFNRSFLTDSGGFQAFSLRANTKNDEGGIKFKSHIDGSIHYFTPRSVLDTQYELDSDIMMILDDLVELPRDPHALGADEKARLKKRIDLSVTRTIKWAREAIDYHKFKQSQGAGLDQNIFGIIQGGTDYDARKICAQALCEMPFDGLAIGGLSVGEANEHMYETVEAVMPFIDAARPRYLMGVGTPEDIVENVQRGVDMFDCVMPTRNARNGTLFTSFGKIAIKNARFVNDHEPIDPECECYTCRRYSRGYLNHLFRAHELTFFRLASLHNLHYYLNLMKQIREAITAGKFSEFKREFYAKRSGGEI.

Residue Asp-90 is the Proton acceptor of the active site. Residues 90-94, Asp-144, Gln-205, and Gly-232 each bind substrate; that span reads DSGGF. The RNA binding stretch occupies residues 263–269; that stretch reads GVGTPED. Asp-282 (nucleophile) is an active-site residue. The interval 287–291 is RNA binding; important for wobble base 34 recognition; that stretch reads TRNAR. 4 residues coordinate Zn(2+): Cys-320, Cys-322, Cys-325, and His-351.

This sequence belongs to the queuine tRNA-ribosyltransferase family. As to quaternary structure, homodimer. Within each dimer, one monomer is responsible for RNA recognition and catalysis, while the other monomer binds to the replacement base PreQ1. It depends on Zn(2+) as a cofactor.

The enzyme catalyses 7-aminomethyl-7-carbaguanine + guanosine(34) in tRNA = 7-aminomethyl-7-carbaguanosine(34) in tRNA + guanine. The protein operates within tRNA modification; tRNA-queuosine biosynthesis. In terms of biological role, catalyzes the base-exchange of a guanine (G) residue with the queuine precursor 7-aminomethyl-7-deazaguanine (PreQ1) at position 34 (anticodon wobble position) in tRNAs with GU(N) anticodons (tRNA-Asp, -Asn, -His and -Tyr). Catalysis occurs through a double-displacement mechanism. The nucleophile active site attacks the C1' of nucleotide 34 to detach the guanine base from the RNA, forming a covalent enzyme-RNA intermediate. The proton acceptor active site deprotonates the incoming PreQ1, allowing a nucleophilic attack on the C1' of the ribose to form the product. After dissociation, two additional enzymatic reactions on the tRNA convert PreQ1 to queuine (Q), resulting in the hypermodified nucleoside queuosine (7-(((4,5-cis-dihydroxy-2-cyclopenten-1-yl)amino)methyl)-7-deazaguanosine). The chain is Queuine tRNA-ribosyltransferase from Campylobacter curvus (strain 525.92).